Here is a 473-residue protein sequence, read N- to C-terminus: Ribulose bisphosphate carboxylase large chain (473 aa).

The substrate site is built by N116 and T166. K168 functions as the Proton acceptor in the catalytic mechanism. K170 contributes to the substrate binding site. Positions 194, 196, and 197 each coordinate Mg(2+). An N6-carboxylysine modification is found at K194. Catalysis depends on H287, which acts as the Proton acceptor. 3 residues coordinate substrate: R288, H320, and S372.

Belongs to the RuBisCO large chain family. Type I subfamily. In terms of assembly, heterohexadecamer of 8 large chains and 8 small chains. The cofactor is Mg(2+).

The catalysed reaction is 2 (2R)-3-phosphoglycerate + 2 H(+) = D-ribulose 1,5-bisphosphate + CO2 + H2O. It carries out the reaction D-ribulose 1,5-bisphosphate + O2 = 2-phosphoglycolate + (2R)-3-phosphoglycerate + 2 H(+). RuBisCO catalyzes two reactions: the carboxylation of D-ribulose 1,5-bisphosphate, the primary event in carbon dioxide fixation, as well as the oxidative fragmentation of the pentose substrate. Both reactions occur simultaneously and in competition at the same active site. The polypeptide is Ribulose bisphosphate carboxylase large chain (Alkalilimnicola ehrlichii (strain ATCC BAA-1101 / DSM 17681 / MLHE-1)).